The following is a 639-amino-acid chain: Methyl-accepting chemotaxis protein McpS (639 aa).

Residues 1–13 lie on the Cytoplasmic side of the membrane; it reads MNSWFANISVNLK. A helical transmembrane segment spans residues 14–34; that stretch reads LGLGFGLVLVLTGLLALTGWT. The Periplasmic portion of the chain corresponds to 35–288; the sequence is SLGSLIDRSN…RDIESTQARS (254 aa). Residues 41 to 283 enclose the HBM domain; the sequence is DRSNWMGDIG…IQLERRDIES (243 aa). 60 to 65 serves as a coordination point for (S)-malate; the sequence is RIARLQ. A succinate-binding site is contributed by 60–65; it reads RIARLQ. Aspartate 138, arginine 183, arginine 187, and tyrosine 236 together coordinate acetate. The stretch at 191 to 245 forms a coiled coil; the sequence is AENSSANEQAALRQLDAALADTDNLKRQLPSEDARLQQFENAVLAYRDAVRQFRD. (S)-malate contacts are provided by arginine 254 and threonine 258. Residue arginine 254 participates in succinate binding. The chain crosses the membrane as a helical span at residues 289–309; the sequence is LQAIATLLALLVGVLAAVLIT. The HAMP domain maps to 310–362; that stretch reads RQITRPLQDTLVAVEKIASGDLTQHMRVTRRDELGVLQQGIARMGTTLRELIS. The Cytoplasmic segment spans residues 310–639; that stretch reads RQITRPLQDT…LQTLVSQFRV (330 aa). One can recognise a Methyl-accepting transducer domain in the interval 367-603; the sequence is GVTQIASAAE…EISRSILNVR (237 aa).

It belongs to the methyl-accepting chemotaxis (MCP) protein family. Homodimer. Exists as a mixture of monomers and dimers in solution. Ligand binding stabilizes the dimeric form. Post-translationally, methylated by CheR2.

Its subcellular location is the cell membrane. With respect to regulation, binding of citrate to the ligand-binding domain reduces the chemotaxis towards the strong attractants such as malate and succinate. However, in physiologically relevant niches, citrate is mostly complexed with magnesium or calcium ions, and does not bind McpS. In terms of biological role, chemotactic-signal transducers respond to changes in the concentration of attractants and repellents in the environment, transduce a signal from the outside to the inside of the cell, and facilitate sensory adaptation through the variation of the level of methylation. McpS is a specific chemoreceptor for 6 tricarboxylic acid (TCA) cycle intermediates (succinate, fumarate, malate, oxaloacetate, citrate and isocitrate), butyrate and acetate. Malate, succinate, fumarate and oxaloacetate cause the strongest chemotactic response. The protein is Methyl-accepting chemotaxis protein McpS (mcpS) of Pseudomonas putida (strain ATCC 47054 / DSM 6125 / CFBP 8728 / NCIMB 11950 / KT2440).